We begin with the raw amino-acid sequence, 405 residues long: Argininosuccinate synthase (405 aa).

Residues 10-18 (AYSGGLDTS) and alanine 37 each bind ATP. L-citrulline-binding residues include tyrosine 88 and serine 93. Glycine 118 lines the ATP pocket. L-aspartate contacts are provided by threonine 120, asparagine 124, and aspartate 125. Asparagine 124 is an L-citrulline binding site. The L-citrulline site is built by arginine 128, serine 179, serine 188, glutamate 264, and tyrosine 276.

Belongs to the argininosuccinate synthase family. Type 1 subfamily. In terms of assembly, homotetramer.

The protein localises to the cytoplasm. It catalyses the reaction L-citrulline + L-aspartate + ATP = 2-(N(omega)-L-arginino)succinate + AMP + diphosphate + H(+). Its pathway is amino-acid biosynthesis; L-arginine biosynthesis; L-arginine from L-ornithine and carbamoyl phosphate: step 2/3. The chain is Argininosuccinate synthase from Pseudomonas fluorescens (strain ATCC BAA-477 / NRRL B-23932 / Pf-5).